The following is a 158-amino-acid chain: Protein hunchback (158 aa).

Over residues 18 to 34 (HNHHHHHHHGHHQHQQR) the composition is skewed to basic residues. Disordered regions lie at residues 18-96 (HNHH…TTTA) and 118-158 (LTPP…KYMA). Positions 41–50 (ASSPHQSPLP) are enriched in polar residues. Low complexity predominate over residues 52–65 (LQLEQYLKQQQQQP). Positions 139 to 158 (EPEKEHDLMSNSSEDMKYMA) are enriched in basic and acidic residues.

It belongs to the hunchback C2H2-type zinc-finger protein family.

The protein resides in the nucleus. In terms of biological role, gap class segmentation protein that controls development of head structures. The sequence is that of Protein hunchback (hb) from Drosophila mimica (Fruit fly).